A 321-amino-acid chain; its full sequence is Sideroflexin-3 (321 aa).

Residue Met-1 is modified to N-acetylmethionine. 4 helical membrane passes run 146–164 (LGTA…ALGL), 174–194 (LVGR…NIPL), 226–246 (FQVV…PPLI), and 266–286 (LQVG…CALF).

Belongs to the sideroflexin family.

The protein localises to the mitochondrion membrane. The catalysed reaction is L-serine(in) = L-serine(out). Mitochondrial serine transporter that mediates transport of serine into mitochondria, an important step of the one-carbon metabolism pathway. Mitochondrial serine is converted to glycine and formate, which then exits to the cytosol where it is used to generate the charged folates that serve as one-carbon donors. This is Sideroflexin-3 from Homo sapiens (Human).